Reading from the N-terminus, the 163-residue chain is uncharacterized protein (163 aa).

A coiled-coil region spans residues 101–162 (LESMKVERKP…KMGERILERE (62 aa)).

This is an uncharacterized protein from Aquifex aeolicus (strain VF5).